A 269-amino-acid polypeptide reads, in one-letter code: MINKTLLQKRFNVAAVSYDQYANVQKKMAHSLLSTLDRRYSANSSIRILELGCGTGYVTEQLSNLFPKAHITAIDFAESMIAVAKTRQNVKNVMFYCEDIERLQLEETYDVIISNATFQWLNDLKQVIRNLFHHLSIDGILLFSTFGQETFQELHTSFQRAKEEKNIQNETSIGQRFYSKNQLRHICEVETGDVHVSETCYIERFTEVREFLHSIRKVGATNSNEESYCQSPSLFRAMLRIYERDFTGNEGIMATYHALFMHITKEGKR.

It belongs to the methyltransferase superfamily.

It catalyses the reaction malonyl-[ACP] + S-adenosyl-L-methionine = malonyl-[ACP] methyl ester + S-adenosyl-L-homocysteine. Its pathway is cofactor biosynthesis; biotin biosynthesis. Its function is as follows. Converts the free carboxyl group of a malonyl-thioester to its methyl ester by transfer of a methyl group from S-adenosyl-L-methionine (SAM). It allows to synthesize pimeloyl-ACP via the fatty acid synthetic pathway. The chain is Malonyl-[acyl-carrier protein] O-methyltransferase from Bacillus anthracis.